The primary structure comprises 114 residues: Small ribosomal subunit protein bS16 (114 aa).

The protein belongs to the bacterial ribosomal protein bS16 family.

This chain is Small ribosomal subunit protein bS16, found in Prochlorococcus marinus subsp. pastoris (strain CCMP1986 / NIES-2087 / MED4).